The sequence spans 1075 residues: Protein EXPORTIN 1A (1075 aa).

One can recognise an Importin N-terminal domain in the interval 37–103 (ADQILRDLQA…KNYISEVIVQ (67 aa)). HEAT repeat units lie at residues 91 to 130 (DGMKNYISEVIVQLSSNEASFRSERLYVNKLNVILVQIVK), 135 to 171 (AKWTSFIPDLVAAAKTSETICENCMAILKLLSEEVFD), 232 to 267 (IFESTLLETLLKFFPVPAYRNLTIQCLTEVAALNFG), 336 to 373 (SLLLAGLEYLINISYVDDTEVFKVCLDYWNSLVLELFD), 388 to 425 (MGLQPFLPGMVDGLGSQVMQRRQLYSHPMSKLRGLMIN), 474 to 513 (DTEKQMLRKLNKQLSGEEWAWNNLNTLCWAIGSISGSMAE), 563 to 600 (KFLKTVVNKLFEFMHETHPGVQDMACDTFLKIVQKCKR), 612 to 649 (PFVSELLTGLATTVQDLEPHQIHSFYESVGNMIQAESD), 682 to 719 (LKDQVVIRTVLNILQTNTSAATSLGTYFLSQISLIFLD), 756 to 793 (RETLKLIETFLDKAEDQPHIGKQFVPPMMESVLGDYAR), 798 to 835 (ARESEVLSLFATIINKYKATMLDDVPHIFEAVFQCTLE), and 894 to 934 (ETGL…VLTD).

Belongs to the exportin family. In terms of assembly, interacts with RAN1. Expressed ubiquitously, with higher levels in stems, inflorescences and roots. Present in mature pollen grains, unpollinated pistils, and 2-week-old seedlings.

The protein localises to the nucleus. Its subcellular location is the nuclear pore complex. It localises to the nucleus membrane. In terms of biological role, receptor for the leucine-rich nuclear export signal (NES). Binds cooperatively to the NES on its target protein and to the small GTPase Ran in its active GTP-bound form. Required for the maternal-to-embryonic transition and during gametophyte development. Involved in heat-induced oxidative stress basal resistance. In Arabidopsis thaliana (Mouse-ear cress), this protein is Protein EXPORTIN 1A.